The primary structure comprises 427 residues: tRNA(Ile)-lysidine synthase (427 aa).

27 to 32 (SGGVDS) contacts ATP.

The protein belongs to the tRNA(Ile)-lysidine synthase family.

Its subcellular location is the cytoplasm. The enzyme catalyses cytidine(34) in tRNA(Ile2) + L-lysine + ATP = lysidine(34) in tRNA(Ile2) + AMP + diphosphate + H(+). Functionally, ligates lysine onto the cytidine present at position 34 of the AUA codon-specific tRNA(Ile) that contains the anticodon CAU, in an ATP-dependent manner. Cytidine is converted to lysidine, thus changing the amino acid specificity of the tRNA from methionine to isoleucine. The protein is tRNA(Ile)-lysidine synthase of Streptococcus equi subsp. equi (strain 4047).